A 326-amino-acid chain; its full sequence is F-box/LRR-repeat protein 12 (326 aa).

Residues 1–47 form the F-box domain; it reads MATLVELPDSVLLEIFSYLPVRDRIRISRVCHRWKRLVDDRWLWRHV. LRR repeat units lie at residues 51–78, 86–111, 113–133, 161–185, 186–211, 212–236, 237–261, and 266–291; these read LYTM…RMGG, APQL…CLHV, DLSM…ELHS, VPAF…VLGG, TYRV…EVLG, CTLS…IRLT, VRGL…CLQG, and PEMP…ELQG.

As to quaternary structure, interacts with SKP1 and CUL1.

The protein operates within protein modification; protein ubiquitination. Substrate-recognition component of the SCF (SKP1-CUL1-F-box protein)-type E3 ubiquitin ligase complex. Mediates the polyubiquitination and proteasomal degradation of CAMK1 leading to disruption of cyclin D1/CDK4 complex assembly which results in G1 cell cycle arrest in lung epithelia. The protein is F-box/LRR-repeat protein 12 (FBXL12) of Homo sapiens (Human).